The sequence spans 387 residues: MMKQISILGSTGSIGRQTLEVVNSFPEELNVVALAAGRNRELFLEQCKAYKPLLVSLQLEEDALWLKEHLIKEKLRPEIRYGLDGLVAVATCHEAVVVVTALSGAIGLVPTCAAIKASKKIALANKETLVAAGQYVTKLAEEYKVEILPVDSEHSAIWQCLHGENRSAIRKIQLTASGGPFRQLNRQELENVTPEMALKHPNWSMGQKITIDSATLMNKGLEVIEAKWLFGVDYDDINVVVHPQSVIHSMVEYGDGSLLAHLGMPDMRIPIQYALSYPERWFNHLPKLNLTELKGLTFEEPDTNRFPSLSLAYQAGKIGGTAPAVLNAANEVAVHAFLAGQIKFMQIPSIVKRTLNEHQFQGSPVLEEILEIDGWAREEANKIIRNC.

Threonine 11, glycine 12, serine 13, isoleucine 14, glycine 37, arginine 38, asparagine 39, and asparagine 125 together coordinate NADPH. Lysine 126 contributes to the 1-deoxy-D-xylulose 5-phosphate binding site. Glutamate 127 is a binding site for NADPH. Position 151 (aspartate 151) interacts with Mn(2+). Residues serine 152, glutamate 153, serine 177, and histidine 200 each coordinate 1-deoxy-D-xylulose 5-phosphate. A Mn(2+)-binding site is contributed by glutamate 153. NADPH is bound at residue glycine 206. Positions 213, 218, 219, and 222 each coordinate 1-deoxy-D-xylulose 5-phosphate. Glutamate 222 serves as a coordination point for Mn(2+).

It belongs to the DXR family. The cofactor is Mg(2+). Mn(2+) serves as cofactor.

The enzyme catalyses 2-C-methyl-D-erythritol 4-phosphate + NADP(+) = 1-deoxy-D-xylulose 5-phosphate + NADPH + H(+). It functions in the pathway isoprenoid biosynthesis; isopentenyl diphosphate biosynthesis via DXP pathway; isopentenyl diphosphate from 1-deoxy-D-xylulose 5-phosphate: step 1/6. Functionally, catalyzes the NADPH-dependent rearrangement and reduction of 1-deoxy-D-xylulose-5-phosphate (DXP) to 2-C-methyl-D-erythritol 4-phosphate (MEP). The polypeptide is 1-deoxy-D-xylulose 5-phosphate reductoisomerase (Desulforamulus reducens (strain ATCC BAA-1160 / DSM 100696 / MI-1) (Desulfotomaculum reducens)).